The following is a 445-amino-acid chain: Phosphoglucosamine mutase (445 aa).

Serine 102 functions as the Phosphoserine intermediate in the catalytic mechanism. Mg(2+)-binding residues include serine 102, aspartate 241, aspartate 243, and aspartate 245. Serine 102 carries the post-translational modification Phosphoserine.

The protein belongs to the phosphohexose mutase family. The cofactor is Mg(2+). Activated by phosphorylation.

It carries out the reaction alpha-D-glucosamine 1-phosphate = D-glucosamine 6-phosphate. In terms of biological role, catalyzes the conversion of glucosamine-6-phosphate to glucosamine-1-phosphate. The chain is Phosphoglucosamine mutase from Citrobacter koseri (strain ATCC BAA-895 / CDC 4225-83 / SGSC4696).